A 302-amino-acid polypeptide reads, in one-letter code: MTATAETSTGTKVVLGQNQYGKAEVRLVKVTRNTARHEIQDLNVTSQLRGDFEAAHTAGDNAHVVATDTQKNTVYAFARDGFATTEEFLLRLGKHFTEGFDWVTGGRWAAQQFFWDRINDHDHAFSRNKSEVRTAVLEISGSEQAIVAGIEGLTVLKSTGSEFHGFPRDKYTTLQETTDRILATDVSARWRYNTVEVDFDAVYASVRGLLLKAFAETHSLALQQTMYEMGRAVIETHPEIDEIKMSLPNKHHFLVDLQPFGQDNPNEVFYAADRPYGLIEATIQREGSRADHPIWSNIAGFC.

Catalysis depends on charge relay system residues Lys-22 and Thr-67. The urate site is built by Thr-67, Asp-68, Phe-163, Arg-180, Gln-223, and Asn-249. His-251 serves as the catalytic Charge relay system.

It belongs to the uricase family. In terms of assembly, homotetramer.

It catalyses the reaction urate + O2 + H2O = 5-hydroxyisourate + H2O2. It participates in purine metabolism; urate degradation; (S)-allantoin from urate: step 1/3. In terms of biological role, catalyzes the oxidation of uric acid to 5-hydroxyisourate, which is further processed to form (S)-allantoin. This Arthrobacter globiformis protein is Uricase (uox).